A 1273-amino-acid polypeptide reads, in one-letter code: Inverted formin-2 (1273 aa).

Disordered regions lie at residues 1 to 30 (MSVK…EANL), 346 to 387 (GRPR…GQQP), 427 to 559 (LSSS…PLPG), 960 to 999 (NKDR…GPGK), and 1021 to 1273 (KTAR…CVIQ). Serine 2 is modified (N-acetylserine). The GBD/FH3 domain maps to 2 to 330 (SVKEGAQRKW…RAVLLASDAQ (329 aa)). Serine 351 is modified (phosphoserine). Positions 359-382 (SVQTNSVQNQGSSSQNTTTPTTKV) are enriched in low complexity. The region spanning 421 to 564 (PLPTPPLSSS…PPLPGFSVPS (144 aa)) is the FH1 domain. Composition is skewed to pro residues over residues 433–516 (VLPP…PLPS) and 524–558 (QPPP…PPLP). The FH2 domain occupies 589 to 979 (HRRVNPPTLR…AERRKQQLAE (391 aa)). A coiled-coil region spans residues 907 to 984 (EASQELDKVF…QQLAEEEARR (78 aa)). A WH2 domain is found at 1007-1022 (DALLADIRKGFQLRKT). Positions 1047-1059 (ATASNPTQGTNHP) are enriched in polar residues. Residues 1088 to 1101 (SKEEDGPPALERRS) are compositionally biased toward basic and acidic residues. Serine 1172 and serine 1174 each carry phosphoserine. Positions 1195-1204 (GEDEDGEDTA) are enriched in acidic residues. Threonine 1203 is subject to Phosphothreonine. Phosphoserine occurs at positions 1216 and 1218. Residues threonine 1223 and threonine 1230 each carry the phosphothreonine modification. Residues 1242-1251 (TSKRRKKRPS) show a composition bias toward basic residues.

The protein belongs to the formin homology family. As to quaternary structure, interacts with profilin and actin at the FH1 and FH2 domains respectively. Interacts with DAAM2.

The protein resides in the cytoplasm. The protein localises to the perinuclear region. Phosphate inhibits both the depolymerization and severing activities. Severs actin filaments and accelerates their polymerization and depolymerization. The protein is Inverted formin-2 (Inf2) of Mus musculus (Mouse).